Consider the following 192-residue polypeptide: Probable protein adenylyltransferase y4lH (192 aa).

The region spanning 52–190 (LDFAHYRALH…LAPLAAEIRR (139 aa)) is the Fido domain. ATP-binding positions include 82 to 83 (KG) and 139 to 141 (GNG).

Belongs to the fic family.

It catalyses the reaction L-tyrosyl-[protein] + ATP = O-(5'-adenylyl)-L-tyrosyl-[protein] + diphosphate. It carries out the reaction L-threonyl-[protein] + ATP = 3-O-(5'-adenylyl)-L-threonyl-[protein] + diphosphate. In terms of biological role, probable adenylyltransferase that mediates the addition of adenosine 5'-monophosphate (AMP) to specific residues of target proteins. The chain is Probable protein adenylyltransferase y4lH from Sinorhizobium fredii (strain NBRC 101917 / NGR234).